A 1068-amino-acid polypeptide reads, in one-letter code: Focal adhesion kinase 1 (1068 aa).

The disordered stretch occupies residues 1-26; the sequence is MAAAYLDPNLNHNPSTNAKSRLSTGM. Positions 10–23 are enriched in polar residues; it reads LNHNPSTNAKSRLS. The 321-residue stretch at 35–355 folds into the FERM domain; sequence RVLRVFHYFE…GYCRLVSGAS (321 aa). 2 positions are modified to phosphotyrosine: Y403 and Y413. In terms of domain architecture, Protein kinase spans 435–693; sequence IELGRCIGEG…ELKAQLSTIL (259 aa). Residues 441-447, K467, and 513-515 contribute to the ATP site; these read IGEGQFG and ELC. Catalysis depends on D559, which acts as the Proton acceptor. Residues Y589 and Y590 each carry the phosphotyrosine; by autocatalysis modification. Positions 699-710 are enriched in basic and acidic residues; that stretch reads QQEERMRMESRR. Disordered regions lie at residues 699 to 750 and 869 to 912; these read QQEE…QHMM and GNQH…DGYN. Phosphotyrosine occurs at positions 874 and 941.

This sequence belongs to the protein kinase superfamily. Tyr protein kinase family. FAK subfamily. In terms of processing, phosphorylated on tyrosine residues; phosphorylated kinase is first detected during gastrulation, suggesting that tyrosine phosphorylation is developmentally regulated.

It is found in the cell junction. The protein resides in the focal adhesion. It localises to the cell membrane. Its subcellular location is the cytoplasm. The protein localises to the cytoskeleton. It is found in the cilium basal body. The catalysed reaction is L-tyrosyl-[protein] + ATP = O-phospho-L-tyrosyl-[protein] + ADP + H(+). Non-receptor protein-tyrosine kinase implicated in signaling pathways involved in cell motility, proliferation and apoptosis. Activated by tyrosine-phosphorylation in response to either integrin clustering induced by cell adhesion or antibody cross-linking, or via G-protein coupled receptor (GPCR) occupancy by ligands such as bombesin or lysophosphatidic acid, or via LDL receptor occupancy. Microtubule-induced dephosphorylation at Tyr-397 is crucial for the induction of focal adhesion disassembly. The polypeptide is Focal adhesion kinase 1 (ptk2) (Xenopus laevis (African clawed frog)).